Here is a 516-residue protein sequence, read N- to C-terminus: Calcitonin receptor (516 aa).

The first 24 residues, 1-24, serve as a signal peptide directing secretion; that stretch reads MRFLLLNRFTLLLLLLVSPTPVLQ. At 25 to 146 the chain is on the extracellular side; sequence APTNLTDSGL…FTPDKLHNAY (122 aa). Residues Asn-28, Asn-73, Asn-125, and Asn-130 are each glycosylated (N-linked (GlcNAc...) asparagine). 3 disulfides stabilise this stretch: Cys-55–Cys-81, Cys-72–Cys-112, and Cys-95–Cys-134. A helical membrane pass occupies residues 147–169; that stretch reads VLYYLALVGHSMSIAALIASMGI. At 170 to 181 the chain is on the cytoplasmic side; sequence FLFFKNLSCQRV. Residues 182 to 202 form a helical membrane-spanning segment; sequence TLHKNMFLTYILNSIIIIIHL. The Extracellular portion of the chain corresponds to 203–256; sequence VEVVPNGDLVRRDPMHIFHHNTYMWTMQWELSPPLPLSAHEGKMDPHDSEVISC. Cysteines 256 and 326 form a disulfide. Residues 257–279 form a helical membrane-spanning segment; it reads KILHFFHQYMMACNYFWMLCEGI. At 280-296 the chain is on the cytoplasmic side; sequence YLHTLIVMAVFTEDQRL. Residues 297–317 form a helical membrane-spanning segment; that stretch reads RWYYLLGWGFPIVPTIIHAIT. Residues 318–333 lie on the Extracellular side of the membrane; sequence RAVYYNDNCWLSTETH. A helical membrane pass occupies residues 334–357; it reads LLYIIHGPVMAALVVNFFFLLNIV. Residues 358 to 377 are Cytoplasmic-facing; sequence RVLVTKMRQTHEAEAYMYLK. The chain crosses the membrane as a helical span at residues 378–396; the sequence is AVKATMVLVPLLGIQFVVF. Over 397–404 the chain is Extracellular; the sequence is PWRPSNKV. Residues 405–431 form a helical membrane-spanning segment; it reads LGKIYDYLMHSLIHFQGFFVATIYCFC. Residues 432-516 are Cytoplasmic-facing; the sequence is NHEVQVTLKR…MNVIQQDSSA (85 aa). Residues 489–516 form a disordered region; it reads RNPPVSNNEGEEGTEMIPMNVIQQDSSA.

This sequence belongs to the G-protein coupled receptor 2 family. In terms of assembly, heterodimer of CALCR and RAMP1, RAMP2 or RAMP3; the receptor complexes function as AMYR1, AMYR2 and AMYR3 receptors, respectively, and respond to amylin/IAPP, calcitonin/CT and CGRP1 ligands. Interacts with GPRASP2.

The protein resides in the cell membrane. In terms of biological role, g protein-coupled receptor activated by ligand peptides amylin (IAPP), calcitonin (CT/CALCA) and calcitonin gene-related peptide type 1 (CGRP1/CALCA). CALCR interacts with receptor-activity-modifying proteins RAMP1, 2 and 3 to form receptor complexes AMYR1, 2 and 3, respectively. IAPP, CT and CGRP1 activate CALCR and AMYRs with distinct modes of receptor activation resulting in specific phenotypes. Ligand binding causes a conformation change that triggers signaling via guanine nucleotide-binding proteins (G proteins) and modulates the activity of downstream effectors. Activates cAMP-dependent pathway. In Rattus norvegicus (Rat), this protein is Calcitonin receptor.